Reading from the N-terminus, the 396-residue chain is Metacaspase-1 (396 aa).

Gly residues predominate over residues 1–20; the sequence is MSGYPGQGYQGQGYGQGYGQ. Residues 1–86 form a disordered region; the sequence is MSGYPGQGYQ…PQGMQQFGHG (86 aa). A compositionally biased stretch (low complexity) spans 47 to 62; sequence HYQYGPPQGGYQYPPQ. Residues 72–81 show a composition bias toward polar residues; that stretch reads QAHQPPQGMQ. Residues H186 and C242 contribute to the active site.

Belongs to the peptidase C14B family.

Its function is as follows. Involved in cell death (apoptosis). The polypeptide is Metacaspase-1 (MCA1) (Pyricularia oryzae (strain 70-15 / ATCC MYA-4617 / FGSC 8958) (Rice blast fungus)).